Reading from the N-terminus, the 955-residue chain is Coiled-coil domain-containing protein 146 (955 aa).

The span at 1-17 shows a compositional bias: acidic residues; the sequence is MEDSSTDTEKEEEEEKD. The tract at residues 1–22 is disordered; the sequence is MEDSSTDTEKEEEEEKDEKDQE. Coiled coils occupy residues 114–141, 169–321, 400–461, 534–640, and 667–832; these read EAFSTEVSKMREQLLKYQNEYNAVKERE, GEME…AREN, STLS…LLRM, KAHQ…RNES, and NGEI…MKQA.

In terms of assembly, interacts with CCDC38 and CCDC42. Interacts with intraflagellar transport proteins IFT20 and IFT88. As to quaternary structure, (Microbial infection) Interacts with Chlamydia trachomatis incM/YT288. In host cells infected with C.trachomatis incM, CCDC146 is recruited to the periphery of the pathogen-containing vacuole but recruitment is not dependent on incM. As to expression, widely expressed.

It localises to the cytoplasm. Its subcellular location is the cytoskeleton. It is found in the microtubule organizing center. The protein resides in the centrosome. The protein localises to the centriole. It localises to the flagellum axoneme. Its subcellular location is the cilium basal body. It is found in the midbody. Functionally, essential for sperm flagellum biogenesis and male fertility. The polypeptide is Coiled-coil domain-containing protein 146 (CCDC146) (Homo sapiens (Human)).